The primary structure comprises 246 residues: Probable hydroxyethylthiazole kinase (246 aa).

Methionine 50 provides a ligand contact to substrate. The ATP site is built by arginine 125 and threonine 145. Substrate is bound at residue glycine 172.

This sequence belongs to the Thz kinase family. Requires Mg(2+) as cofactor.

It catalyses the reaction 5-(2-hydroxyethyl)-4-methylthiazole + ATP = 4-methyl-5-(2-phosphooxyethyl)-thiazole + ADP + H(+). The protein operates within cofactor biosynthesis; thiamine diphosphate biosynthesis; 4-methyl-5-(2-phosphoethyl)-thiazole from 5-(2-hydroxyethyl)-4-methylthiazole: step 1/1. In terms of biological role, catalyzes the phosphorylation of the hydroxyl group of 4-methyl-5-beta-hydroxyethylthiazole (THZ). This chain is Probable hydroxyethylthiazole kinase (thiM), found in Agrobacterium fabrum (strain C58 / ATCC 33970) (Agrobacterium tumefaciens (strain C58)).